Here is a 626-residue protein sequence, read N- to C-terminus: Trehalase (626 aa).

The first 35 residues, 1 to 35, serve as a signal peptide directing secretion; it reads MASSCSIRCGSRNILVNAAATFLALLVVLRCFANA. Over 36 to 595 the chain is Extracellular; that stretch reads EKPSPCQSDV…STPQPVVVST (560 aa). Asn104 carries N-linked (GlcNAc...) asparagine glycosylation. Residues Arg181, 188-189, Asn225, and 234-236 contribute to the substrate site; these read WD and RSQ. Asn274 carries N-linked (GlcNAc...) asparagine glycosylation. Substrate-binding positions include 299–301 and Gly333; that span reads RPE. Asp335 functions as the Proton donor/acceptor in the catalytic mechanism. N-linked (GlcNAc...) asparagine glycans are attached at residues Asn350, Asn384, Asn498, and Asn525. Glu532 (proton donor/acceptor) is an active-site residue. Glu547 lines the substrate pocket. Residues 596 to 616 traverse the membrane as a helical segment; it reads AGQVMTGILALVISLAAGFIG. At 617 to 626 the chain is on the cytoplasmic side; the sequence is KMRCANNAAQ.

The protein belongs to the glycosyl hydrolase 37 family. Monomer. Glycosylated; contains 3.1% carbohydrates.

The protein resides in the membrane. It catalyses the reaction alpha,alpha-trehalose + H2O = alpha-D-glucose + beta-D-glucose. Inhibited by sodium, potassium and ammonium ions, and by TEMED. This is Trehalase from Apis mellifera (Honeybee).